The primary structure comprises 536 residues: CTP synthase (536 aa).

The amidoligase domain stretch occupies residues 1–267 (MSKFVFVTGG…CKETLKYLEL (267 aa)). S13 contributes to the CTP binding site. S13 lines the UTP pocket. Residues 14–19 (SIGKGI) and D71 contribute to the ATP site. Positions 71 and 141 each coordinate Mg(2+). CTP is bound by residues 148–150 (DIE), 188–193 (KTKPTQ), and K224. UTP is bound by residues 188 to 193 (KTKPTQ) and K224. One can recognise a Glutamine amidotransferase type-1 domain in the interval 292–534 (KVALVGKYIE…IKASQEKLTQ (243 aa)). G354 is a binding site for L-glutamine. The active-site Nucleophile; for glutamine hydrolysis is the C381. L-glutamine contacts are provided by residues 382–385 (LGMQ), E405, and R462. Active-site residues include H507 and E509.

The protein belongs to the CTP synthase family. In terms of assembly, homotetramer.

It catalyses the reaction UTP + L-glutamine + ATP + H2O = CTP + L-glutamate + ADP + phosphate + 2 H(+). The catalysed reaction is L-glutamine + H2O = L-glutamate + NH4(+). It carries out the reaction UTP + NH4(+) + ATP = CTP + ADP + phosphate + 2 H(+). It functions in the pathway pyrimidine metabolism; CTP biosynthesis via de novo pathway; CTP from UDP: step 2/2. With respect to regulation, allosterically activated by GTP, when glutamine is the substrate; GTP has no effect on the reaction when ammonia is the substrate. The allosteric effector GTP functions by stabilizing the protein conformation that binds the tetrahedral intermediate(s) formed during glutamine hydrolysis. Inhibited by the product CTP, via allosteric rather than competitive inhibition. In terms of biological role, catalyzes the ATP-dependent amination of UTP to CTP with either L-glutamine or ammonia as the source of nitrogen. Regulates intracellular CTP levels through interactions with the four ribonucleotide triphosphates. The polypeptide is CTP synthase (Prochlorococcus marinus (strain MIT 9215)).